The following is a 145-amino-acid chain: MESKEELRQRIGDLAFEVTQHAATERAFTGQYDDFFEKGIYVDVVSGEVLFSSLDKFNSGCGWPAFSRPIHHRMVTNHHDSSHGMRRVEVKSREAGSHLGHVFNDGPREAGGLRYCINSAALKFIPYDQMEQEGYAEWLGIFDKS.

Residues 4-127 (KEELRQRIGD…NSAALKFIPY (124 aa)) form the MsrB domain. The active-site Nucleophile is the cysteine 116.

It belongs to the MsrB Met sulfoxide reductase family.

The catalysed reaction is L-methionyl-[protein] + [thioredoxin]-disulfide + H2O = L-methionyl-(R)-S-oxide-[protein] + [thioredoxin]-dithiol. The protein is Peptide methionine sulfoxide reductase MsrB of Streptococcus equi subsp. zooepidemicus (strain H70).